Reading from the N-terminus, the 304-residue chain is MLKNNSVISINDLSDEDLNLIFNTADSMAGNLKNGSQIKTMSGRIMATLFFEPSTRTRLSFESAMQRLGGSVISMADSKSSSTAKGETLADTTRMVSSYSDIIVVRHPLEGAARLVQKFSSRPVINAGDGSGEHPTQTLVDLYTIKKSFGDINNLEISIIGDLRYGRTVHSLLLALSRYNVRINLVSPDLLRLPGHVMSRLKNIKINEYNDLNNVIESSDVFYVTRIQRERFTDKNDYNKVIGTYGITEKDTEKMKENAIIMHPLPRVDEISSSVDNTKNAKYFIQAANGIPVRMALISLILGD.

Arg-56 and Thr-57 together coordinate carbamoyl phosphate. Residue Lys-85 participates in L-aspartate binding. The carbamoyl phosphate site is built by Arg-106, His-134, and Gln-137. 2 residues coordinate L-aspartate: Arg-167 and Arg-226. Residues Leu-265 and Pro-266 each contribute to the carbamoyl phosphate site.

Belongs to the aspartate/ornithine carbamoyltransferase superfamily. ATCase family. Heterooligomer of catalytic and regulatory chains.

It catalyses the reaction carbamoyl phosphate + L-aspartate = N-carbamoyl-L-aspartate + phosphate + H(+). It participates in pyrimidine metabolism; UMP biosynthesis via de novo pathway; (S)-dihydroorotate from bicarbonate: step 2/3. Catalyzes the condensation of carbamoyl phosphate and aspartate to form carbamoyl aspartate and inorganic phosphate, the committed step in the de novo pyrimidine nucleotide biosynthesis pathway. The sequence is that of Aspartate carbamoyltransferase catalytic subunit from Picrophilus torridus (strain ATCC 700027 / DSM 9790 / JCM 10055 / NBRC 100828 / KAW 2/3).